Reading from the N-terminus, the 190-residue chain is dTTP/UTP pyrophosphatase (190 aa).

The Proton acceptor role is filled by Asp67.

It belongs to the Maf family. YhdE subfamily. Requires a divalent metal cation as cofactor.

It is found in the cytoplasm. The catalysed reaction is dTTP + H2O = dTMP + diphosphate + H(+). The enzyme catalyses UTP + H2O = UMP + diphosphate + H(+). Functionally, nucleoside triphosphate pyrophosphatase that hydrolyzes dTTP and UTP. May have a dual role in cell division arrest and in preventing the incorporation of modified nucleotides into cellular nucleic acids. The polypeptide is dTTP/UTP pyrophosphatase (Aquifex aeolicus (strain VF5)).